The chain runs to 128 residues: Large ribosomal subunit protein eL22 (128 aa).

Belongs to the eukaryotic ribosomal protein eL22 family. Component of the large ribosomal subunit.

It is found in the cytoplasm. Its function is as follows. Component of the large ribosomal subunit. The ribosome is a large ribonucleoprotein complex responsible for the synthesis of proteins in the cell. In Xenopus tropicalis (Western clawed frog), this protein is Large ribosomal subunit protein eL22 (rpl22).